The sequence spans 41 residues: Augerpeptide-s11a (41 aa).

In terms of processing, contains 4 disulfide bonds. As to expression, expressed by the venom duct.

The protein localises to the secreted. In terms of biological role, does not elicit any observable symptomatology in C.elegans. This chain is Augerpeptide-s11a, found in Terebra subulata (Chocolate spotted auger).